Reading from the N-terminus, the 362-residue chain is Phosphoserine aminotransferase (362 aa).

Arg43 serves as a coordination point for L-glutamate. Pyridoxal 5'-phosphate is bound by residues 77-78, Trp103, Thr153, Asp173, and Gln196; that span reads AT. Residue Lys197 is modified to N6-(pyridoxal phosphate)lysine. Pyridoxal 5'-phosphate is bound at residue 238–239; the sequence is NT.

It belongs to the class-V pyridoxal-phosphate-dependent aminotransferase family. SerC subfamily. In terms of assembly, homodimer. Requires pyridoxal 5'-phosphate as cofactor.

Its subcellular location is the cytoplasm. It catalyses the reaction O-phospho-L-serine + 2-oxoglutarate = 3-phosphooxypyruvate + L-glutamate. The enzyme catalyses 4-(phosphooxy)-L-threonine + 2-oxoglutarate = (R)-3-hydroxy-2-oxo-4-phosphooxybutanoate + L-glutamate. It functions in the pathway amino-acid biosynthesis; L-serine biosynthesis; L-serine from 3-phospho-D-glycerate: step 2/3. Its pathway is cofactor biosynthesis; pyridoxine 5'-phosphate biosynthesis; pyridoxine 5'-phosphate from D-erythrose 4-phosphate: step 3/5. Its function is as follows. Catalyzes the reversible conversion of 3-phosphohydroxypyruvate to phosphoserine and of 3-hydroxy-2-oxo-4-phosphonooxybutanoate to phosphohydroxythreonine. In Xylella fastidiosa (strain Temecula1 / ATCC 700964), this protein is Phosphoserine aminotransferase.